Consider the following 201-residue polypeptide: Pyridoxal 5'-phosphate synthase subunit PdxT (201 aa).

51 to 53 is a binding site for L-glutamine; sequence GES. C83 (nucleophile) is an active-site residue. Residues R112 and 141-142 contribute to the L-glutamine site; that span reads IR. Residues H182 and E184 each act as charge relay system in the active site.

Belongs to the glutaminase PdxT/SNO family. In the presence of PdxS, forms a dodecamer of heterodimers. Only shows activity in the heterodimer.

It carries out the reaction aldehydo-D-ribose 5-phosphate + D-glyceraldehyde 3-phosphate + L-glutamine = pyridoxal 5'-phosphate + L-glutamate + phosphate + 3 H2O + H(+). The catalysed reaction is L-glutamine + H2O = L-glutamate + NH4(+). It participates in cofactor biosynthesis; pyridoxal 5'-phosphate biosynthesis. Catalyzes the hydrolysis of glutamine to glutamate and ammonia as part of the biosynthesis of pyridoxal 5'-phosphate. The resulting ammonia molecule is channeled to the active site of PdxS. The chain is Pyridoxal 5'-phosphate synthase subunit PdxT from Thermobifida fusca (strain YX).